Consider the following 214-residue polypeptide: Protein get-1 (214 aa).

Topologically, residues 1-4 (MPSL) are lumenal. The helical transmembrane segment at 5 to 24 (LVVIFVIELFVQLVNTIGAA) threads the bilayer. Residues 25 to 110 (TINNLLWRIA…KFDRTLTTVR (86 aa)) lie on the Cytoplasmic side of the membrane. The stretch at 73 to 107 (KWARLRRQHDKLLEDLEKRKKELDAAKTKFDRTLT) forms a coiled coil. The chain crosses the membrane as a helical span at residues 111 to 131 (VVATRGLQWFLPFWYSREPMF). The Lumenal portion of the chain corresponds to 132-155 (WLPYGWFPYYVEWFASFPRAPLGS). The helical transmembrane segment at 156 to 172 (VSIVVWQWACTGVIKLV) threads the bilayer. The Cytoplasmic portion of the chain corresponds to 173–214 (IETVMAVVGLIVAARQKQQEKQKAKQAVPAAGGGDSKAEEAK). Positions 190–214 (QQEKQKAKQAVPAAGGGDSKAEEAK) are disordered.

This sequence belongs to the WRB/GET1 family. In terms of assembly, interacts with GET3.

Its subcellular location is the endoplasmic reticulum membrane. Functionally, required for the post-translational delivery of tail-anchored (TA) proteins to the endoplasmic reticulum. Acts as a membrane receptor for soluble GET3, which recognizes and selectively binds the transmembrane domain of TA proteins in the cytosol. In Neurospora crassa (strain ATCC 24698 / 74-OR23-1A / CBS 708.71 / DSM 1257 / FGSC 987), this protein is Protein get-1 (get-1).